The sequence spans 367 residues: Probable dual-specificity RNA methyltransferase RlmN (367 aa).

Glu92 (proton acceptor) is an active-site residue. The Radical SAM core domain maps to 98-326 (QEYGLSVCVT…YDTLKKNGIN (229 aa)). The cysteines at positions 105 and 341 are disulfide-linked. [4Fe-4S] cluster-binding residues include Cys112, Cys116, and Cys119. Residues 164-165 (GE), Ser196, 219-221 (SLH), and Asn297 contribute to the S-adenosyl-L-methionine site. The active-site S-methylcysteine intermediate is the Cys341.

This sequence belongs to the radical SAM superfamily. RlmN family. [4Fe-4S] cluster is required as a cofactor.

The protein localises to the cytoplasm. It catalyses the reaction adenosine(2503) in 23S rRNA + 2 reduced [2Fe-2S]-[ferredoxin] + 2 S-adenosyl-L-methionine = 2-methyladenosine(2503) in 23S rRNA + 5'-deoxyadenosine + L-methionine + 2 oxidized [2Fe-2S]-[ferredoxin] + S-adenosyl-L-homocysteine. The enzyme catalyses adenosine(37) in tRNA + 2 reduced [2Fe-2S]-[ferredoxin] + 2 S-adenosyl-L-methionine = 2-methyladenosine(37) in tRNA + 5'-deoxyadenosine + L-methionine + 2 oxidized [2Fe-2S]-[ferredoxin] + S-adenosyl-L-homocysteine. Specifically methylates position 2 of adenine 2503 in 23S rRNA and position 2 of adenine 37 in tRNAs. This Listeria monocytogenes serovar 1/2a (strain ATCC BAA-679 / EGD-e) protein is Probable dual-specificity RNA methyltransferase RlmN.